Here is a 184-residue protein sequence, read N- to C-terminus: Threonylcarbamoyl-AMP synthase (184 aa).

The YrdC-like domain occupies 1–184 (MNNLENIVEQ…IFTQHIFRQG (184 aa)).

This sequence belongs to the SUA5 family. TsaC subfamily.

It is found in the cytoplasm. The catalysed reaction is L-threonine + hydrogencarbonate + ATP = L-threonylcarbamoyladenylate + diphosphate + H2O. Its function is as follows. Required for the formation of a threonylcarbamoyl group on adenosine at position 37 (t(6)A37) in tRNAs that read codons beginning with adenine. Catalyzes the conversion of L-threonine, HCO(3)(-)/CO(2) and ATP to give threonylcarbamoyl-AMP (TC-AMP) as the acyladenylate intermediate, with the release of diphosphate. The protein is Threonylcarbamoyl-AMP synthase of Actinobacillus pleuropneumoniae serotype 5b (strain L20).